The chain runs to 1417 residues: DNA-directed RNA polymerase subunit beta' (1417 aa).

Residues Cys68, Cys70, Cys83, and Cys86 each coordinate Zn(2+). 3 residues coordinate Mg(2+): Asp458, Asp460, and Asp462. Zn(2+) contacts are provided by Cys811, Cys884, Cys891, and Cys894.

This sequence belongs to the RNA polymerase beta' chain family. As to quaternary structure, the RNAP catalytic core consists of 2 alpha, 1 beta, 1 beta' and 1 omega subunit. When a sigma factor is associated with the core the holoenzyme is formed, which can initiate transcription. The cofactor is Mg(2+). Zn(2+) is required as a cofactor.

The catalysed reaction is RNA(n) + a ribonucleoside 5'-triphosphate = RNA(n+1) + diphosphate. Its function is as follows. DNA-dependent RNA polymerase catalyzes the transcription of DNA into RNA using the four ribonucleoside triphosphates as substrates. The chain is DNA-directed RNA polymerase subunit beta' from Francisella tularensis subsp. mediasiatica (strain FSC147).